Consider the following 347-residue polypeptide: Protein RecA (347 aa).

67 to 74 provides a ligand contact to ATP; the sequence is GPESSGKT.

Belongs to the RecA family.

It localises to the cytoplasm. Can catalyze the hydrolysis of ATP in the presence of single-stranded DNA, the ATP-dependent uptake of single-stranded DNA by duplex DNA, and the ATP-dependent hybridization of homologous single-stranded DNAs. It interacts with LexA causing its activation and leading to its autocatalytic cleavage. This is Protein RecA from Helicobacter pylori (strain Shi470).